Consider the following 212-residue polypeptide: Peroxiredoxin 2 (212 aa).

The region spanning 7–162 (PLIGEKFPEM…ILRSIRALQL (156 aa)) is the Thioredoxin domain. The active-site Cysteine sulfenic acid (-SOH) intermediate is Cys49. Position 125 (Arg125) interacts with substrate.

This sequence belongs to the peroxiredoxin family. Prx6 subfamily. As to quaternary structure, homodecamer. Pentamer of dimers that assemble into a ring structure.

The protein resides in the cytoplasm. The enzyme catalyses a hydroperoxide + [thioredoxin]-dithiol = an alcohol + [thioredoxin]-disulfide + H2O. Functionally, thiol-specific peroxidase that catalyzes the reduction of hydrogen peroxide and organic hydroperoxides to water and alcohols, respectively. Plays a role in cell protection against oxidative stress by detoxifying peroxides. This Sulfurisphaera tokodaii (strain DSM 16993 / JCM 10545 / NBRC 100140 / 7) (Sulfolobus tokodaii) protein is Peroxiredoxin 2.